A 513-amino-acid chain; its full sequence is MARSNRCVPQNSSIVQIPIEEVFKTQLKSRWQQITMSSASSPPPPQVFVPEPLFSEPPPPPKAPVNVSLSPPPPPRSPSTSTPPRLGNRNPPPPASPSGQEPTTPTMTPGFSLSPPSPSRLSTGAVVGISIGGGVFVLTLIFFLCKKKRPRDDKALPAPIGLVLGIHQSTFTYGELARATNKFSEANLLGEGGFGFVYKGILNNGNEVAVKQLKVGSAQGEKEFQAEVNIISQIHHRNLVSLVGYCIAGAQRLLVYEFVPNNTLEFHLHGKGRPTMEWSLRLKIAVSSSKGLSYLHENCNPKIIHRDIKAANILIDFKFEAKVADFGLAKIALDTNTHVSTRVMGTFGYLAPEYAASGKLTEKSDVYSFGVVLLELITGRRPVDANNVYADDSLVDWARPLLVQALEESNFEGLADIKLNNEYDREEMARMVACAAACVRYTARRRPRMDQVVRVLEGNISPSDLNQGITPGHSNTVSVRLDARAVRVKPHGEMDSRWGRFKRTAQRYGGDSL.

At 1 to 123 (MARSNRCVPQ…SPPSPSRLST (123 aa)) the chain is on the extracellular side. Asn-11 carries N-linked (GlcNAc...) asparagine glycosylation. The span at 27-36 (LKSRWQQITM) shows a compositional bias: polar residues. Residues 27-119 (LKSRWQQITM…GFSLSPPSPS (93 aa)) form a disordered region. Asn-66 carries N-linked (GlcNAc...) asparagine glycosylation. Residues 78-89 (PSTSTPPRLGNR) show a composition bias toward low complexity. A compositionally biased stretch (polar residues) spans 99-111 (GQEPTTPTMTPGF). Residues 124–144 (GAVVGISIGGGVFVLTLIFFL) traverse the membrane as a helical segment. Residues 145–513 (CKKKRPRDDK…TAQRYGGDSL (369 aa)) lie on the Cytoplasmic side of the membrane. Thr-172 carries the post-translational modification Phosphothreonine. The Protein kinase domain occupies 183 to 334 (FSEANLLGEG…DFGLAKIALD (152 aa)). Residues 189 to 197 (LGEGGFGFV) and Lys-211 contribute to the ATP site. Tyr-256 bears the Phosphotyrosine mark. Catalysis depends on Asp-307, which acts as the Proton acceptor. Ser-340 is subject to Phosphoserine. Phosphothreonine occurs at positions 341 and 346. A Phosphotyrosine modification is found at Tyr-354.

The protein belongs to the protein kinase superfamily. Ser/Thr protein kinase family. As to expression, expressed at low levels in inflorescence bolt, flower buds, siliques, roots, seedlings and leaves.

It localises to the cell membrane. The catalysed reaction is L-seryl-[protein] + ATP = O-phospho-L-seryl-[protein] + ADP + H(+). It catalyses the reaction L-threonyl-[protein] + ATP = O-phospho-L-threonyl-[protein] + ADP + H(+). In Arabidopsis thaliana (Mouse-ear cress), this protein is Proline-rich receptor-like protein kinase PERK3 (PERK3).